The sequence spans 828 residues: Glycerol-3-phosphate acyltransferase (828 aa).

The short motif at 309–314 (CHRSHI) is the HXXXXD motif element.

This sequence belongs to the GPAT/DAPAT family.

It is found in the cell inner membrane. The catalysed reaction is sn-glycerol 3-phosphate + an acyl-CoA = a 1-acyl-sn-glycero-3-phosphate + CoA. The protein operates within phospholipid metabolism; CDP-diacylglycerol biosynthesis; CDP-diacylglycerol from sn-glycerol 3-phosphate: step 1/3. This Pseudomonas putida (strain GB-1) protein is Glycerol-3-phosphate acyltransferase.